The sequence spans 94 residues: Trp operon repressor homolog (94 aa).

Residues glutamine 58–glycine 81 mediate DNA binding.

It belongs to the TrpR family. In terms of assembly, homodimer.

It localises to the cytoplasm. Functionally, this protein is an aporepressor. When complexed with L-tryptophan it binds the operator region of the trp operon and prevents the initiation of transcription. The polypeptide is Trp operon repressor homolog (Chlamydia trachomatis serovar L2 (strain ATCC VR-902B / DSM 19102 / 434/Bu)).